The chain runs to 116 residues: uncharacterized protein (116 aa).

This is an uncharacterized protein from Methanocaldococcus jannaschii (strain ATCC 43067 / DSM 2661 / JAL-1 / JCM 10045 / NBRC 100440) (Methanococcus jannaschii).